The following is a 338-amino-acid chain: 2,3-dihydroxybenzoate decarboxylase (338 aa).

The active site involves cysteine 251.

Belongs to the metallo-dependent hydrolases superfamily. As to quaternary structure, homotetramer.

It catalyses the reaction 2,3-dihydroxybenzoate + H(+) = catechol + CO2. It functions in the pathway aromatic compound metabolism; benzoate degradation via hydroxylation. Has an absolute substrate specificity for 2,3-DHBA. The sequence is that of 2,3-dihydroxybenzoate decarboxylase from Aspergillus oryzae (strain ATCC 42149 / RIB 40) (Yellow koji mold).